Reading from the N-terminus, the 143-residue chain is Large ribosomal subunit protein uL15 (143 aa).

Positions 1 to 13 are enriched in basic residues; it reads MIRKKKKVKKIRG. The tract at residues 1–39 is disordered; the sequence is MIRKKKKVKKIRGSRTCGGGSHKKRRGAGNKGGRGMAGG. Gly residues predominate over residues 29–38; that stretch reads GNKGGRGMAG.

This sequence belongs to the universal ribosomal protein uL15 family. As to quaternary structure, part of the 50S ribosomal subunit.

Functionally, binds to the 23S rRNA. This Methanocaldococcus jannaschii (strain ATCC 43067 / DSM 2661 / JAL-1 / JCM 10045 / NBRC 100440) (Methanococcus jannaschii) protein is Large ribosomal subunit protein uL15.